The sequence spans 75 residues: Conotoxin Vt15.1 (75 aa).

The signal sequence occupies residues 1-19; it reads MMPVILPLLLSLAIRGGDG. A propeptide spanning residues 20 to 43 is cleaved from the precursor; sequence QAIQGDRDLIAKLFKRYQEHGLSV. W73 carries the tryptophan amide modification.

This sequence belongs to the conotoxin V superfamily. Contains 4 disulfide bonds. Expressed by the venom duct.

The protein resides in the secreted. In Conus planorbis (Planorbis cone), this protein is Conotoxin Vt15.1.